We begin with the raw amino-acid sequence, 377 residues long: E3 ubiquitin-protein ligase RING1 (377 aa).

Positions 1-205 (MDGTEIAVSP…GGAGSEDSGD (205 aa)) are necessary for transcriptional repression. Phosphoserine is present on Ser-9. The RING-type zinc finger occupies 19–59 (CPICLDMLKNTMTTKECLHRFCSDCIVTALRSGNKECPTCR). Phosphoserine is present on residues Ser-111, Ser-158, and Ser-161. Disordered stretches follow at residues 119–234 (QAMH…GEIE) and 280–325 (QQQE…PSLE). The segment covering 146-158 (DPGEGEGDGEDVS) has biased composition (acidic residues). The Nuclear localization signal motif lies at 172-175 (KRPR). Residues 176–199 (GGGAGGSSVGTGGGGTGGVGGGAG) are compositionally biased toward gly residues. A phosphothreonine mark is found at Thr-186 and Thr-191. Phosphoserine is present on residues Ser-200 and Ser-203. The necessary for interaction with CBX2 stretch occupies residues 201 to 377 (EDSGDRGGTL…LCYAPTKDPK (177 aa)). Gly residues predominate over residues 206–215 (RGGTLGGGTL). Over residues 217–229 (PPSPPGAPSPPEP) the composition is skewed to pro residues. Phosphoserine is present on residues Ser-219 and Ser-225. A compositionally biased stretch (gly residues) spans 286–314 (EPGGPGGGASDTGGPDGGGGEGGGAGGGD).

As to quaternary structure, component of chromatin-associated Polycomb (PcG) complexes. Part of the E2F6.com-1 complex in G0 phase composed of E2F6, MGA, MAX, TFDP1, CBX3, BAT8, EUHMTASE1, RING1, RNF2/RING2 MBLR, L3MBTL2 and YAF2. Interacts with CBX2 and PCGF6. Component of a PRC1-like complex. Component of repressive BCOR complex containing Polycomb group subcomplex at least composed of RYBP, PCGF1, BCOR and RNF2/RING2. Interacts with BMI1, PHC2, PCGF2, RNF2; CBX6, CBX7 and CBX8. Interacts with MN1.

The protein localises to the nucleus speckle. The catalysed reaction is S-ubiquitinyl-[E2 ubiquitin-conjugating enzyme]-L-cysteine + [acceptor protein]-L-lysine = [E2 ubiquitin-conjugating enzyme]-L-cysteine + N(6)-ubiquitinyl-[acceptor protein]-L-lysine.. Its pathway is protein modification; protein ubiquitination. In terms of biological role, constitutes one of the E3 ubiquitin-protein ligases that mediate monoubiquitination of 'Lys-119' of histone H2A, thereby playing a central role in histone code and gene regulation. H2A 'Lys-119' ubiquitination gives a specific tag for epigenetic transcriptional repression and participates in X chromosome inactivation of female mammals. Essential component of a Polycomb group (PcG) multiprotein PRC1-like complex, a complex class required to maintain the transcriptionally repressive state of many genes, including Hox genes, throughout development. PcG PRC1 complex acts via chromatin remodeling and modification of histones, rendering chromatin heritably changed in its expressibility. Compared to RNF2/RING2, it does not have the main E3 ubiquitin ligase activity on histone H2A, and it may rather act as a modulator of RNF2/RING2 activity. The polypeptide is E3 ubiquitin-protein ligase RING1 (RING1) (Gorilla gorilla gorilla (Western lowland gorilla)).